The chain runs to 497 residues: tRNA-2-methylthio-N(6)-dimethylallyladenosine synthase (497 aa).

Residues 1–48 (MTGTSNIPTHGKEHKDAPALLPLPAPNTHHTHAAHPGDPSHDRHPSRG) are disordered. Low complexity predominate over residues 18-28 (PALLPLPAPNT). Residues 48 to 165 (GKLFIKTHGC…LPDMIRARRE (118 aa)) enclose the MTTase N-terminal domain. [4Fe-4S] cluster-binding residues include cysteine 57, cysteine 94, cysteine 128, cysteine 202, cysteine 206, and cysteine 209. A Radical SAM core domain is found at 188–430 (RAEGPSAFVS…QKHINAYAAD (243 aa)). A TRAM domain is found at 433 to 496 (KRMIGTVQTV…TNSLRGRVHT (64 aa)).

This sequence belongs to the methylthiotransferase family. MiaB subfamily. In terms of assembly, monomer. It depends on [4Fe-4S] cluster as a cofactor.

The protein resides in the cytoplasm. The catalysed reaction is N(6)-dimethylallyladenosine(37) in tRNA + (sulfur carrier)-SH + AH2 + 2 S-adenosyl-L-methionine = 2-methylsulfanyl-N(6)-dimethylallyladenosine(37) in tRNA + (sulfur carrier)-H + 5'-deoxyadenosine + L-methionine + A + S-adenosyl-L-homocysteine + 2 H(+). Functionally, catalyzes the methylthiolation of N6-(dimethylallyl)adenosine (i(6)A), leading to the formation of 2-methylthio-N6-(dimethylallyl)adenosine (ms(2)i(6)A) at position 37 in tRNAs that read codons beginning with uridine. The sequence is that of tRNA-2-methylthio-N(6)-dimethylallyladenosine synthase from Xylella fastidiosa (strain M23).